The primary structure comprises 323 residues: HPr kinase/phosphorylase (323 aa).

Active-site residues include histidine 142 and lysine 163. ATP is bound at residue 157 to 164; it reads GESGVGKS. Residue serine 164 coordinates Mg(2+). Aspartate 181 serves as the catalytic Proton acceptor; for phosphorylation activity. Proton donor; for dephosphorylation activity. The tract at residues 205–214 is important for the catalytic mechanism of both phosphorylation and dephosphorylation; the sequence is LEVRGLGMLN. Glutamate 206 serves as a coordination point for Mg(2+). Arginine 249 is a catalytic residue. Residues 270-275 form an important for the catalytic mechanism of dephosphorylation region; it reads PVAAGR.

It belongs to the HPrK/P family. As to quaternary structure, homohexamer. The cofactor is Mg(2+).

The catalysed reaction is [HPr protein]-L-serine + ATP = [HPr protein]-O-phospho-L-serine + ADP + H(+). It catalyses the reaction [HPr protein]-O-phospho-L-serine + phosphate + H(+) = [HPr protein]-L-serine + diphosphate. Its function is as follows. Catalyzes the ATP- as well as the pyrophosphate-dependent phosphorylation of a specific serine residue in HPr, a phosphocarrier protein of the phosphoenolpyruvate-dependent sugar phosphotransferase system (PTS). HprK/P also catalyzes the pyrophosphate-producing, inorganic phosphate-dependent dephosphorylation (phosphorolysis) of seryl-phosphorylated HPr (P-Ser-HPr). The chain is HPr kinase/phosphorylase from Nitrosomonas europaea (strain ATCC 19718 / CIP 103999 / KCTC 2705 / NBRC 14298).